Here is a 229-residue protein sequence, read N- to C-terminus: MAKKSKNLRAALEKIDSTKLYSVEEAVALAKKTNFAKFDASVEVAYNLNIDVRKADQQIRGAMVLPNGTGKTSRVLVFARGAKAEEAKAAGADFVGEDDLVAKINGGWLDFDVVIATPDMMAVVGRLGRVLGPRNLMPNPKTGTVTMDVAKAVEESKGGKITYRADKAGIVQALIGKVSFDADKLVENFKAFHDVMAKAKPATAKGTYMTSVSITTTQGVGIKVDPNSL.

It belongs to the universal ribosomal protein uL1 family. Part of the 50S ribosomal subunit.

Its function is as follows. Binds directly to 23S rRNA. The L1 stalk is quite mobile in the ribosome, and is involved in E site tRNA release. Protein L1 is also a translational repressor protein, it controls the translation of the L11 operon by binding to its mRNA. The protein is Large ribosomal subunit protein uL1 of Streptococcus suis (strain 98HAH33).